A 278-amino-acid polypeptide reads, in one-letter code: GTPase Era (278 aa).

The Era-type G domain occupies Tyr-7–Asn-168. Residues Gly-15 to Ser-22 form a G1 region. A GTP-binding site is contributed by Gly-15–Ser-22. The G2 stretch occupies residues Asn-41–Lys-45. Residues Asp-62–Gly-65 are G3. Residues Asp-62–Ile-66 and Asn-117–Asp-120 contribute to the GTP site. The interval Asn-117–Asp-120 is G4. The tract at residues Ile-147–Ala-149 is G5. In terms of domain architecture, KH type-2 spans Leu-199 to Ile-276.

This sequence belongs to the TRAFAC class TrmE-Era-EngA-EngB-Septin-like GTPase superfamily. Era GTPase family. As to quaternary structure, monomer.

The protein localises to the cytoplasm. It localises to the cell membrane. Functionally, an essential GTPase that binds both GDP and GTP, with rapid nucleotide exchange. Plays a role in 16S rRNA processing and 30S ribosomal subunit biogenesis and possibly also in cell cycle regulation and energy metabolism. The polypeptide is GTPase Era (Buchnera aphidicola subsp. Schizaphis graminum (strain Sg)).